The following is a 249-amino-acid chain: Probable calcium-binding protein CML12 (249 aa).

Over residues 1–24 (MQSQRERPREDRVHEETRGADHAH) the composition is skewed to basic and acidic residues. The interval 1–80 (MQSQRERPRE…RKGKAPATAE (80 aa)) is disordered. Low complexity predominate over residues 30–56 (AAAAASATATETATRTMSLHAGGVVVV). Over residues 57 to 70 (DGKEKGKKEEGEGK) the composition is skewed to basic and acidic residues. EF-hand domains are found at residues 91-126 (EQLR…LGLR), 128-163 (AAGD…LILG), 171-206 (VDQA…MGHP), and 207-242 (ICYA…SALD). Ca(2+)-binding residues include Asp104, Asp106, Asp108, Ser110, Glu115, Asp141, Asp143, Asn145, Thr147, Glu152, Asp184, Asp186, Asn188, Glu195, Asp220, Asp222, Asp224, and Glu231.

Potential calcium sensor. This Oryza sativa subsp. japonica (Rice) protein is Probable calcium-binding protein CML12 (CML12).